The chain runs to 434 residues: UDP-glucose 6-dehydrogenase (434 aa).

Residues 2–19 (NITF…GIIM), valine 11, aspartate 30, lysine 35, threonine 121, and glutamate 152 contribute to the NAD(+) site. Substrate contacts are provided by residues 148–152 (EFLRE), lysine 204, asparagine 208, 249–253 (FLNAG), and glycine 257. The Nucleophile role is filled by cysteine 260. An NAD(+)-binding site is contributed by lysine 263. Lysine 321 is a substrate binding site. Residue arginine 328 coordinates NAD(+).

It belongs to the UDP-glucose/GDP-mannose dehydrogenase family.

It catalyses the reaction UDP-alpha-D-glucose + 2 NAD(+) + H2O = UDP-alpha-D-glucuronate + 2 NADH + 3 H(+). The protein operates within nucleotide-sugar biosynthesis; UDP-alpha-D-glucuronate biosynthesis; UDP-alpha-D-glucuronate from UDP-alpha-D-glucose: step 1/1. This is UDP-glucose 6-dehydrogenase (udg) from Rickettsia typhi (strain ATCC VR-144 / Wilmington).